The primary structure comprises 722 residues: PAB1-binding protein 1 (722 aa).

Basic and acidic residues predominate over residues 1-10; the sequence is MKGNFRKRDS. The segment at 1 to 38 is disordered; that stretch reads MKGNFRKRDSSTNSRKGGNSDSNYTNGGVPNQNNSSMF. Residues 11–38 are compositionally biased toward polar residues; the sequence is STNSRKGGNSDSNYTNGGVPNQNNSSMF. The region spanning 51–107 is the Sm domain; sequence RQDYLLANSIGSDVTVTVTSGVKYTGLLVSCNLESTNGIDVVLRFPRVADSGVSDSV. Phosphoserine is present on S106. At T193 the chain carries Phosphothreonine. Position 215 is a phosphoserine (S215). 3 disordered regions span residues 305–380, 412–488, and 683–722; these read ALKS…LSSK, SSTL…NPHT, and GSGPSGMPANGSAMHSHGHSRNYHQTSHHGHHNSSTSGHK. Low complexity-rich tracts occupy residues 307 to 316, 338 to 347, 356 to 370, and 412 to 421; these read KSNSKPNSNK, SSSNSNKNEN, PAAAGAPEGKPPQKT, and SSTLKSNSSL. A Glycyl lysine isopeptide (Lys-Gly) (interchain with G-Cter in ubiquitin) cross-link involves residue K344. Residues 429-455 are compositionally biased toward polar residues; it reads TPSAKTVSPTTQISAGKSESRRSGSNI. S436 carries the post-translational modification Phosphoserine. Low complexity predominate over residues 456-471; sequence SQGQSSTGHTTRSSTS. The segment covering 698-722 has biased composition (basic residues); that stretch reads SHGHSRNYHQTSHHGHHNSSTSGHK.

This sequence belongs to the ataxin-2 family. As to quaternary structure, interacts (via C-terminus) with MKT1 (via C-terminus). Interacts with FIR1, IGO1, LSM12, PBP4 and PAB1.

The protein resides in the cytoplasm. It localises to the nucleus. The protein localises to the mitochondrion. Its function is as follows. Involved in pre-mRNA polyadenylation. May act to repress the ability of PAB1 to negatively regulate polyadenylation. Negative regulator of poly(A) nuclease (PAN) activity. Promotes mating-type switching in mother cells by positively regulating HO mRNA translation. Localizes MKT1 to polysomes. This chain is PAB1-binding protein 1 (PBP1), found in Saccharomyces cerevisiae (strain ATCC 204508 / S288c) (Baker's yeast).